The chain runs to 277 residues: Orotidine 5'-phosphate decarboxylase (277 aa).

Substrate contacts are provided by residues Asp40, 62–64, 93–102, Tyr229, and Arg247; these read KTH and DRKFIDIGNT. The Proton donor role is filled by Lys95.

The protein belongs to the OMP decarboxylase family.

The catalysed reaction is orotidine 5'-phosphate + H(+) = UMP + CO2. Its pathway is pyrimidine metabolism; UMP biosynthesis via de novo pathway; UMP from orotate: step 2/2. In Aspergillus awamori (Black koji mold), this protein is Orotidine 5'-phosphate decarboxylase (pyrG).